The primary structure comprises 507 residues: CWF19-like protein DRN1 (507 aa).

The residue at position 242 (Ser242) is a Phosphoserine.

This sequence belongs to the CWF19 family. In terms of assembly, interacts with DBR1. Interacts with SYF1, a component of the NTC complex. Interacts with lariat-introns and lariat-intermediates.

Its subcellular location is the nucleus. The protein localises to the cytoplasm. Its function is as follows. Involved in branched RNA metabolism, modulating the turnover of lariat-intron pre-mRNAs by the lariat-debranching enzyme DBR1. Enhances the debranching activity of DBR1 in vitro. The polypeptide is CWF19-like protein DRN1 (DRN1) (Saccharomyces cerevisiae (strain ATCC 204508 / S288c) (Baker's yeast)).